Consider the following 147-residue polypeptide: Acidic phospholipase A2 beta-bungarotoxin A4 chain (147 aa).

An N-terminal signal peptide occupies residues 1–19 (MNPAHLLVLSAVCVSLLGA). Residues 20–27 (ANIPPQHL) constitute a propeptide that is removed on maturation. Intrachain disulfides connect C54/C146, C56/C72, C71/C127, C78/C120, C88/C113, and C106/C118. Y55, G57, and G59 together coordinate Ca(2+). Residue H75 is part of the active site. D76 lines the Ca(2+) pocket. The active site involves D121.

Belongs to the phospholipase A2 family. Group I subfamily. D49 sub-subfamily. As to quaternary structure, heterodimer; disulfide-linked. The A chains have phospholipase A2 activity and the B chains show homology with the basic protease inhibitors. It depends on Ca(2+) as a cofactor. As to expression, expressed by the venom gland.

It localises to the secreted. It carries out the reaction a 1,2-diacyl-sn-glycero-3-phosphocholine + H2O = a 1-acyl-sn-glycero-3-phosphocholine + a fatty acid + H(+). Snake venom phospholipase A2 (PLA2) that inhibits neuromuscular transmission by blocking acetylcholine release from the nerve termini. PLA2 catalyzes the calcium-dependent hydrolysis of the 2-acyl groups in 3-sn-phosphoglycerides. This Bungarus multicinctus (Many-banded krait) protein is Acidic phospholipase A2 beta-bungarotoxin A4 chain.